The sequence spans 26 residues: Probable early E4 17 kDa protein (26 aa).

The sequence is that of Probable early E4 17 kDa protein from Homo sapiens (Human).